The primary structure comprises 122 residues: Small ribosomal subunit protein uS13 (122 aa).

Residues 97–122 (PVRGQRTHTNARTRKGPARAIAGKKK) are disordered.

This sequence belongs to the universal ribosomal protein uS13 family. Part of the 30S ribosomal subunit. Forms a loose heterodimer with protein S19. Forms two bridges to the 50S subunit in the 70S ribosome.

Functionally, located at the top of the head of the 30S subunit, it contacts several helices of the 16S rRNA. In the 70S ribosome it contacts the 23S rRNA (bridge B1a) and protein L5 of the 50S subunit (bridge B1b), connecting the 2 subunits; these bridges are implicated in subunit movement. Contacts the tRNAs in the A and P-sites. This is Small ribosomal subunit protein uS13 from Bartonella bacilliformis (strain ATCC 35685 / KC583 / Herrer 020/F12,63).